The following is a 476-amino-acid chain: ATP synthase subunit beta, chloroplastic (476 aa).

155–162 (GGAGVGKT) provides a ligand contact to ATP.

This sequence belongs to the ATPase alpha/beta chains family. F-type ATPases have 2 components, CF(1) - the catalytic core - and CF(0) - the membrane proton channel. CF(1) has five subunits: alpha(3), beta(3), gamma(1), delta(1), epsilon(1). CF(0) has four main subunits: a(1), b(1), b'(1) and c(9-12).

The protein resides in the plastid. It is found in the chloroplast thylakoid membrane. The catalysed reaction is ATP + H2O + 4 H(+)(in) = ADP + phosphate + 5 H(+)(out). Functionally, produces ATP from ADP in the presence of a proton gradient across the membrane. The catalytic sites are hosted primarily by the beta subunits. The polypeptide is ATP synthase subunit beta, chloroplastic (Emiliania huxleyi (Coccolithophore)).